A 523-amino-acid polypeptide reads, in one-letter code: WD repeat-containing protein YPL247C (523 aa).

The interval 1–64 (MDPFHNGNKR…TTNGGNSKRN (64 aa)) is disordered. The span at 9-40 (KRSSISFGSSQRQPYNKNNYLSGTNGPSSAAQ) shows a compositional bias: polar residues. Ser-47 is subject to Phosphoserine. Positions 52–64 (SGNTTNGGNSKRN) are enriched in low complexity. Ser-65 carries the phosphoserine modification. WD repeat units follow at residues 173–213 (DVVY…RQFQ), 241–281 (GTFP…YVKT), 285–325 (AHDS…HSTI), and 392–432 (GHGS…MEIN). Residues 436–472 (SKSPSIHGTSLEDPDGDTEMTDGGAGSGLNEDPLSLN) are disordered.

It belongs to the WD repeat WDR68 family.

It localises to the cytoplasm. The protein resides in the nucleus. The polypeptide is WD repeat-containing protein YPL247C (Saccharomyces cerevisiae (strain ATCC 204508 / S288c) (Baker's yeast)).